Consider the following 149-residue polypeptide: Endoribonuclease YbeY (149 aa).

Residues histidine 116, histidine 120, and histidine 126 each contribute to the Zn(2+) site.

The protein belongs to the endoribonuclease YbeY family. It depends on Zn(2+) as a cofactor.

The protein localises to the cytoplasm. Functionally, single strand-specific metallo-endoribonuclease involved in late-stage 70S ribosome quality control and in maturation of the 3' terminus of the 16S rRNA. The polypeptide is Endoribonuclease YbeY (Nocardioides sp. (strain ATCC BAA-499 / JS614)).